The primary structure comprises 465 residues: MDKNSQLRDMNLFRAPAARAAKTLDRSVFAKTLNAAAASISENRLLSKYRKELEKTQEVLFMERFNPILPDPDPSLASQGRKCIVLSPQIKPASPETWSPTLQEASKLGELKVVPYDLEITYDFWNYFDVVKSILPEELHGEIPSGFNTVGHVAHLNIRDQYLPYKNIIAQVLLDKNPHIKTVINKIDNVGSENEFRTFAYEVLGGPDNMNVEVSEAGCIFRFDYSKVYWNSKLDTEHKRITSFFKPGEVVADVMAGIGPFAVPAGKKGVFVWANDKNPESHRYLEDAIQKNKVWEFVKPFNHDGHDFIRTSADLVLEASKRGDCAVIKPPRPPRKSAAPPPEPVRVPVPPTISHFVMNLPASAIEFLHNYRGLYHGHEDLFEPHTETKLPIVHVHCFSAKMDDDTPLKDICERIHKEIGVMLKPGDAEKEGEVLIYDVRDVAPAKRMFCASFRLPREVAFAARA.

The transit peptide at 1 to 20 (MDKNSQLRDMNLFRAPAARA) directs the protein to the mitochondrion. S-adenosyl-L-methionine contacts are provided by residues His238 and 304–305 (DG). The disordered stretch occupies residues 326–345 (AVIKPPRPPRKSAAPPPEPV). An S-adenosyl-L-methionine-binding site is contributed by Asn359.

This sequence belongs to the class I-like SAM-binding methyltransferase superfamily. TRM5/TYW2 family. In terms of assembly, monomer.

The protein localises to the mitochondrion matrix. It is found in the nucleus. Its subcellular location is the cytoplasm. It carries out the reaction guanosine(37) in tRNA + S-adenosyl-L-methionine = N(1)-methylguanosine(37) in tRNA + S-adenosyl-L-homocysteine + H(+). In terms of biological role, specifically methylates the N1 position of guanosine-37 in various cytoplasmic and mitochondrial tRNAs. Methylation is not dependent on the nature of the nucleoside 5' of the target nucleoside. This is the first step in the biosynthesis of wybutosine (yW), a modified base adjacent to the anticodon of tRNAs and required for accurate decoding. This is tRNA (guanine(37)-N(1))-methyltransferase from Fusarium vanettenii (strain ATCC MYA-4622 / CBS 123669 / FGSC 9596 / NRRL 45880 / 77-13-4) (Fusarium solani subsp. pisi).